A 343-amino-acid chain; its full sequence is Holliday junction branch migration complex subunit RuvB (343 aa).

Residues 1 to 186 (MVMARKSDTL…FQIQERLEYY (186 aa)) are large ATPase domain (RuvB-L). ATP contacts are provided by residues Leu25, Arg26, Gly67, Lys70, Thr71, Ser72, 133 to 135 (EDF), Arg176, Tyr186, and Arg223. Thr71 lines the Mg(2+) pocket. Positions 187 to 257 (DAKALESILH…LAQKSLDRLG (71 aa)) are small ATPAse domain (RuvB-S). The head domain (RuvB-H) stretch occupies residues 260–343 (ASGLDSMDRK…PPPTPQGSLF (84 aa)). DNA is bound by residues Arg296, Arg315, and Arg320.

The protein belongs to the RuvB family. As to quaternary structure, homohexamer. Forms an RuvA(8)-RuvB(12)-Holliday junction (HJ) complex. HJ DNA is sandwiched between 2 RuvA tetramers; dsDNA enters through RuvA and exits via RuvB. An RuvB hexamer assembles on each DNA strand where it exits the tetramer. Each RuvB hexamer is contacted by two RuvA subunits (via domain III) on 2 adjacent RuvB subunits; this complex drives branch migration. In the full resolvosome a probable DNA-RuvA(4)-RuvB(12)-RuvC(2) complex forms which resolves the HJ.

Its subcellular location is the cytoplasm. The catalysed reaction is ATP + H2O = ADP + phosphate + H(+). In terms of biological role, the RuvA-RuvB-RuvC complex processes Holliday junction (HJ) DNA during genetic recombination and DNA repair, while the RuvA-RuvB complex plays an important role in the rescue of blocked DNA replication forks via replication fork reversal (RFR). RuvA specifically binds to HJ cruciform DNA, conferring on it an open structure. The RuvB hexamer acts as an ATP-dependent pump, pulling dsDNA into and through the RuvAB complex. RuvB forms 2 homohexamers on either side of HJ DNA bound by 1 or 2 RuvA tetramers; 4 subunits per hexamer contact DNA at a time. Coordinated motions by a converter formed by DNA-disengaged RuvB subunits stimulates ATP hydrolysis and nucleotide exchange. Immobilization of the converter enables RuvB to convert the ATP-contained energy into a lever motion, pulling 2 nucleotides of DNA out of the RuvA tetramer per ATP hydrolyzed, thus driving DNA branch migration. The RuvB motors rotate together with the DNA substrate, which together with the progressing nucleotide cycle form the mechanistic basis for DNA recombination by continuous HJ branch migration. Branch migration allows RuvC to scan DNA until it finds its consensus sequence, where it cleaves and resolves cruciform DNA. The polypeptide is Holliday junction branch migration complex subunit RuvB (Myxococcus xanthus (strain DK1622)).